A 303-amino-acid polypeptide reads, in one-letter code: UDP-N-acetylenolpyruvoylglucosamine reductase (303 aa).

Positions 23-188 constitute an FAD-binding PCMH-type domain; it reads KVGGPADYLV…ISAKFALKPG (166 aa). Residue Arg-167 is part of the active site. The active-site Proton donor is Ser-217. Residue Glu-287 is part of the active site.

This sequence belongs to the MurB family. Requires FAD as cofactor.

It localises to the cytoplasm. The catalysed reaction is UDP-N-acetyl-alpha-D-muramate + NADP(+) = UDP-N-acetyl-3-O-(1-carboxyvinyl)-alpha-D-glucosamine + NADPH + H(+). The protein operates within cell wall biogenesis; peptidoglycan biosynthesis. In terms of biological role, cell wall formation. This Streptococcus uberis (strain ATCC BAA-854 / 0140J) protein is UDP-N-acetylenolpyruvoylglucosamine reductase.